The following is a 147-amino-acid chain: Large ribosomal subunit protein uL13 (147 aa).

The segment at 126–147 (GGPEHPHAAQNPQPYEITQIAQ) is disordered.

The protein belongs to the universal ribosomal protein uL13 family. As to quaternary structure, part of the 50S ribosomal subunit.

Its function is as follows. This protein is one of the early assembly proteins of the 50S ribosomal subunit, although it is not seen to bind rRNA by itself. It is important during the early stages of 50S assembly. This is Large ribosomal subunit protein uL13 from Cutibacterium acnes (strain DSM 16379 / KPA171202) (Propionibacterium acnes).